Here is a 620-residue protein sequence, read N- to C-terminus: Chaperone protein HscA homolog (620 aa).

Belongs to the heat shock protein 70 family.

In terms of biological role, chaperone involved in the maturation of iron-sulfur cluster-containing proteins. Has a low intrinsic ATPase activity which is markedly stimulated by HscB. In Paracidovorax citrulli (strain AAC00-1) (Acidovorax citrulli), this protein is Chaperone protein HscA homolog.